We begin with the raw amino-acid sequence, 318 residues long: Ribonuclease Z (318 aa).

Residues histidine 63, histidine 65, aspartate 67, histidine 68, histidine 142, aspartate 210, and histidine 268 each contribute to the Zn(2+) site. Catalysis depends on aspartate 67, which acts as the Proton acceptor.

Belongs to the RNase Z family. As to quaternary structure, homodimer. The cofactor is Zn(2+).

It carries out the reaction Endonucleolytic cleavage of RNA, removing extra 3' nucleotides from tRNA precursor, generating 3' termini of tRNAs. A 3'-hydroxy group is left at the tRNA terminus and a 5'-phosphoryl group is left at the trailer molecule.. Its function is as follows. Zinc phosphodiesterase, which displays some tRNA 3'-processing endonuclease activity. Probably involved in tRNA maturation, by removing a 3'-trailer from precursor tRNA. This Thermobifida fusca (strain YX) protein is Ribonuclease Z.